The chain runs to 330 residues: GMP reductase (330 aa).

The active-site Thioimidate intermediate is the cysteine 180. 209-232 (LIADGGIRHNGDIAKSVRFGASMV) provides a ligand contact to NADP(+).

This sequence belongs to the IMPDH/GMPR family. GuaC type 2 subfamily.

It carries out the reaction IMP + NH4(+) + NADP(+) = GMP + NADPH + 2 H(+). Functionally, catalyzes the irreversible NADPH-dependent deamination of GMP to IMP. It functions in the conversion of nucleobase, nucleoside and nucleotide derivatives of G to A nucleotides, and in maintaining the intracellular balance of A and G nucleotides. The chain is GMP reductase from Lactobacillus delbrueckii subsp. bulgaricus (strain ATCC BAA-365 / Lb-18).